A 216-amino-acid polypeptide reads, in one-letter code: Uracil-DNA glycosylase (216 aa).

The active-site Proton acceptor is Asp-59.

This sequence belongs to the uracil-DNA glycosylase (UDG) superfamily. UNG family.

The protein localises to the cytoplasm. The catalysed reaction is Hydrolyzes single-stranded DNA or mismatched double-stranded DNA and polynucleotides, releasing free uracil.. Functionally, excises uracil residues from the DNA which can arise as a result of misincorporation of dUMP residues by DNA polymerase or due to deamination of cytosine. The protein is Uracil-DNA glycosylase of Staphylococcus epidermidis (strain ATCC 35984 / DSM 28319 / BCRC 17069 / CCUG 31568 / BM 3577 / RP62A).